The following is a 291-amino-acid chain: Transmembrane O-methyltransferase (291 aa).

A helical membrane pass occupies residues 31–51; it reads VGTMSPAIALAFLPLVVTLLV. S-adenosyl-L-methionine-binding positions include Glu137, 139-140, Ser145, Glu163, and Ser193; that span reads GT.

The protein belongs to the class I-like SAM-binding methyltransferase superfamily. Cation-dependent O-methyltransferase family. In terms of assembly, interacts with LHFPL5, PCDH15, TMC1, TMC2 and TMIE. Interacts directly with TMC1. The interaction of TOMT with TMC1 and TMC2 is required for the transportation of TMC1/2 into the stereocilia of hair cells.

Its subcellular location is the membrane. The protein resides in the cytoplasm. It is found in the endoplasmic reticulum. The catalysed reaction is a catechol + S-adenosyl-L-methionine = a guaiacol + S-adenosyl-L-homocysteine + H(+). Catalyzes the O-methylation, and thereby the inactivation, of catecholamine neurotransmitters and catechol hormones. Required for auditory function. Component of the cochlear hair cell's mechanotransduction (MET) machinery. Involved in the assembly of the asymmetric tip-link MET complex. Required for transportation of TMC1 and TMC2 proteins into the mechanically sensitive stereocilia of the hair cells. The function in MET is independent of the enzymatic activity. This chain is Transmembrane O-methyltransferase, found in Pan troglodytes (Chimpanzee).